The chain runs to 227 residues: 2-C-methyl-D-erythritol 4-phosphate cytidylyltransferase (227 aa).

Belongs to the IspD/TarI cytidylyltransferase family. IspD subfamily.

It carries out the reaction 2-C-methyl-D-erythritol 4-phosphate + CTP + H(+) = 4-CDP-2-C-methyl-D-erythritol + diphosphate. It functions in the pathway isoprenoid biosynthesis; isopentenyl diphosphate biosynthesis via DXP pathway; isopentenyl diphosphate from 1-deoxy-D-xylulose 5-phosphate: step 2/6. In terms of biological role, catalyzes the formation of 4-diphosphocytidyl-2-C-methyl-D-erythritol from CTP and 2-C-methyl-D-erythritol 4-phosphate (MEP). The polypeptide is 2-C-methyl-D-erythritol 4-phosphate cytidylyltransferase (Tolumonas auensis (strain DSM 9187 / NBRC 110442 / TA 4)).